A 216-amino-acid polypeptide reads, in one-letter code: Adenylate kinase (216 aa).

Residue 10–15 (GAGKGT) coordinates ATP. The interval 30-59 (STGDILRENVKKGTALGLKAKSYMDKGELV) is NMP. AMP is bound by residues Thr31, Arg36, 57-59 (ELV), 85-88 (GFPR), and Gln92. The segment at 126-163 (GRRICRSCGASYHLVFNPPKAKDLCDSCGGELYQRDDD) is LID. Arg127 lines the ATP pocket. Zn(2+) is bound by residues Cys130 and Cys133. 136–137 (SY) lines the ATP pocket. Zn(2+) contacts are provided by Cys150 and Cys153. AMP contacts are provided by Arg160 and Arg171. Lys199 contributes to the ATP binding site.

This sequence belongs to the adenylate kinase family. In terms of assembly, monomer.

It is found in the cytoplasm. The enzyme catalyses AMP + ATP = 2 ADP. Its pathway is purine metabolism; AMP biosynthesis via salvage pathway; AMP from ADP: step 1/1. Its function is as follows. Catalyzes the reversible transfer of the terminal phosphate group between ATP and AMP. Plays an important role in cellular energy homeostasis and in adenine nucleotide metabolism. The protein is Adenylate kinase of Methanocella arvoryzae (strain DSM 22066 / NBRC 105507 / MRE50).